We begin with the raw amino-acid sequence, 238 residues long: Ribonuclease PH (238 aa).

Residues R86 and 124 to 126 (GTR) each bind phosphate.

It belongs to the RNase PH family. As to quaternary structure, homohexameric ring arranged as a trimer of dimers.

The catalysed reaction is tRNA(n+1) + phosphate = tRNA(n) + a ribonucleoside 5'-diphosphate. Functionally, phosphorolytic 3'-5' exoribonuclease that plays an important role in tRNA 3'-end maturation. Removes nucleotide residues following the 3'-CCA terminus of tRNAs; can also add nucleotides to the ends of RNA molecules by using nucleoside diphosphates as substrates, but this may not be physiologically important. Probably plays a role in initiation of 16S rRNA degradation (leading to ribosome degradation) during starvation. The polypeptide is Ribonuclease PH (Marinobacter nauticus (strain ATCC 700491 / DSM 11845 / VT8) (Marinobacter aquaeolei)).